Consider the following 722-residue polypeptide: Zinc finger protein 600 (722 aa).

The segment at 162–184 (FQCNESGKAFNCSSLLRKHQIPH) adopts a C2H2-type 1; degenerate zinc-finger fold. 9 C2H2-type zinc fingers span residues 190 to 212 (YKCD…CRCH), 218 to 240 (YKCN…RRLH), 246 to 268 (HKCN…KAIH), 274 to 296 (YKCN…RRIH), 302 to 324 (YKCE…KRIH), 330 to 352 (YKCK…KRIH), 358 to 380 (YKCN…HRLH), 386 to 408 (YKCK…TRIH), and 414 to 436 (YKCN…KSIH). The C2H2-type 11; degenerate zinc-finger motif lies at 442 to 464 (YKYEECEKVFSCGSTLETHKIIH). 9 C2H2-type zinc fingers span residues 470-492 (YKCK…TRIH), 498-520 (YKCN…RRVH), 526-548 (YKCN…RRLH), 554-576 (YKCN…RRLH), 582-604 (YKCT…TRIH), 610-632 (YKCN…HRIH), 638-660 (YKCE…RRIH), 666-688 (YKCK…TGLH), and 694-716 (YKCN…QAVH).

This sequence belongs to the krueppel C2H2-type zinc-finger protein family.

Its subcellular location is the nucleus. In terms of biological role, may be involved in transcriptional regulation. This is Zinc finger protein 600 (ZNF600) from Homo sapiens (Human).